A 1615-amino-acid chain; its full sequence is MESIKNQLIPLLKKNWTLKGKSKIKLLLEILLPLISIGILFGILYLSMIITRDFKERPASGFAFDIAHTKQLLIGSNGGLNSDQRNILDNLKLQVSIQHPEFSNDYINRCFVEFKDIESMDEYFHDPFNYRGVMGGVWFPDDSFNGNTIKYSIRVDSDFTHDNTQQFQDREDSQIYLRHYFTQIQTGVDQAILLTNQIAIPIFATGQRFPNPYISFWEKWTDGRKLILLNTGGVFITASLFATLFTLITNIVIEKETKILEGMKTMGLNSFAYYISNSIISLITLLSSTLLVSIILSASQLVHHVKWITLILILIPYSITLLLIAFILCKFFTKSKYAGLMAFLIVLLLSGIGIIIGRFNISPTLKLLSCLFSPIAISVANYVWCYKDLIVFKEVDINVNMVNEYEIIGMLVFDIFLYILILWYLDNVITGEYGIPKKWYFFLTKNYWRKNKKSNINNNGVFDVEATSCNRNSSYNEKNFEKIEHQLERPTISIRNLRKEFKTGDGNRIAVNDLSIDMYKNRIHSFLGPNGSGKSTTLSMLTGMIEPTSGDALINGFDIRNNIDEIRKHLGVCPQSDIIWEQLTVMEHLEFYAALKGFTNSNQRKVEATKIALEVGLGEKLNAPAGTLSGGQKRKLCLAIAFIGPNSDIILIDEPTSGLDASNRRLIWDFILKYRENKTIILVSHYLEECDILSNTISIIANGELKCNGSSLFLKNRFGVGYLLTISKEHNSINNSNLTKTISDIIFNHIPKGSLLSDAGTELCFRLPNESIGNFSNLFKELDDRKKQLSIENYGISITTLEEVFLKIISNSETNPNFNQSVLNTALKTNSSGIKSYQQLKGLLIKRVKTSRKDIKSFVLSILIPILILAGGLILYKNMRTIDIYNTVTQPLILDFNVYGKSVTPVSIDKVNETMTSLFDNSIGHSDRTTLVPYDELHDYLIHHYFGVPGALYFDFRYFKNVKFLHYNVFFNKDYLHALPIYINFVDSEILRSVTGKRIQTTSLPFEHIQSPLEVASLDVNFVAIVFFIILTLASFSLIAASHAGNISHERSTRVKRLLYISGLRKSIYWLSNLIWDYLQTFILVIFLTIVIIAVDDKFRTHFDLYISGVVLFTFSIIPLSYLMSFKFSSHGKAVGAIFAIHFGVGLIFTVISFILRVWAIKENSISFQFLTDIIEYCFYAISPFFCFSKILAIVTKFPGVSRVDQSFIDYWSFHFGLLPNAILFLHCIVWITWILLIDYSSEIKGKFTISKLFSNSPIPDSNEDSDVSNERIIVKQLLDNNTNGGSGNVYPIIFNNLYKKFNSVGNYKSKIAVYNSTLAIPTGQTFGLLGLNGCGKSTTLGMISGEISPTGGKIKLNGYDLIKNRNDALTSIGYCFQFDALIGLLSAREQLELYCRIKGVDESKIKDTVNAFIQMMDLESISNSNTSGYSGGNKRKVSLSIACIGSPSILLLDEISCGVDACVKRFMWNVLMELKKNKAIILTTHSIAECQAVCDKLTIMKDGKLQALGSNQHIKDKFGSGYSIEVKFKKEYLENGVELFLQSFPSASLIDNQHALSASFELPNPPNNPIKLSSIFSNIEQSLKFILDDYSVSQTSIEQIFIKLTKNSITNIDN.

7 helical membrane passes run 30–50 (ILLP…SMII), 233–253 (GVFI…NIVI), 278–298 (SIIS…ILSA), 308–328 (ITLI…AFIL), 337–357 (YAGL…IIIG), 365–385 (LKLL…YVWC), and 405–425 (YEII…LWYL). The ABC transmembrane type-2 domain occupies 182–383 (TQIQTGVDQA…PIAISVANYV (202 aa)). One can recognise an ABC transporter 1 domain in the interval 492–727 (ISIRNLRKEF…FGVGYLLTIS (236 aa)). Position 528–535 (528–535 (GPNGSGKS)) interacts with ATP. The next 7 helical transmembrane spans lie at 855–875 (IKSF…GLIL), 1022–1042 (FVAI…IAAS), 1075–1095 (IWDY…IIAV), 1106–1126 (YISG…LMSF), 1135–1155 (VGAI…ISFI), 1174–1194 (IIEY…ILAI), and 1218–1238 (LLPN…ILLI). The ABC transporter 2 domain occupies 1293–1528 (IIFNNLYKKF…FGSGYSIEVK (236 aa)). Residue 1331–1338 (GLNGCGKS) participates in ATP binding.

The protein belongs to the ABC transporter superfamily. ABCA family.

Its subcellular location is the membrane. The polypeptide is ABC transporter A family member 4 (abcA4) (Dictyostelium discoideum (Social amoeba)).